The following is a 622-amino-acid chain: Phosphatidylinositol 4-kinase gamma 6 (622 aa).

The 58-residue stretch at 38-95 (RRVFVQTDTGCVLGVELDRNDNVHTVKKRLQIAFNFPTEESSLTFGDMVLKNDLSAVR) folds into the Ubiquitin-like; degenerate domain. Positions 158–459 (GVEPIPVNGG…LTTEQDVLSP (302 aa)) constitute a PI3K/PI4K catalytic domain. A G-loop region spans residues 164–170 (VNGGLGG). Residues 165 to 171 (NGGLGGA), lysine 186, and 277 to 280 (QKFV) each bind ATP. The interval 310 to 318 (LNTDRHGGN) is catalytic loop. The interval 339-365 (PIDHGLCLPETLEDPYFEWIHWPQASI) is activation loop. Aspartate 341 lines the ATP pocket. The residue at position 565 (serine 565) is a Phosphoserine.

Belongs to the PI3/PI4-kinase family. Type II PI4K subfamily.

It carries out the reaction a 1,2-diacyl-sn-glycero-3-phospho-(1D-myo-inositol) + ATP = a 1,2-diacyl-sn-glycero-3-phospho-(1D-myo-inositol 4-phosphate) + ADP + H(+). The phosphorylation of phosphatidylinositol (PI) to PI4P is the first committed step in the generation of phosphatidylinositol 4,5-bisphosphate (PIP2), a precursor of the second messenger inositol 1,4,5-trisphosphate (InsP3). The sequence is that of Phosphatidylinositol 4-kinase gamma 6 (PI4KG6) from Arabidopsis thaliana (Mouse-ear cress).